We begin with the raw amino-acid sequence, 120 residues long: ATP-dependent Clp protease adapter protein ClpS (120 aa).

It belongs to the ClpS family. Binds to the N-terminal domain of the chaperone ClpA.

Functionally, involved in the modulation of the specificity of the ClpAP-mediated ATP-dependent protein degradation. The chain is ATP-dependent Clp protease adapter protein ClpS from Pseudomonas savastanoi pv. phaseolicola (strain 1448A / Race 6) (Pseudomonas syringae pv. phaseolicola (strain 1448A / Race 6)).